A 54-amino-acid polypeptide reads, in one-letter code: Salt stress-induced hydrophobic peptide ESI3 (54 aa).

2 consecutive transmembrane segments (helical) span residues 2–22 and 34–54; these read GSAT…GVFL and LLLT…VLVV.

This sequence belongs to the UPF0057 (PMP3) family.

Its subcellular location is the membrane. This chain is Salt stress-induced hydrophobic peptide ESI3 (ESI3), found in Thinopyrum elongatum (Tall wheatgrass).